A 470-amino-acid chain; its full sequence is Putative F-box/LRR-repeat protein At3g58920 (470 aa).

The region spanning 1 to 53 (MDRISNLPNEIICHIVSFLSAKEAAFASVLSKRWQNLFTIVQKLEFDDSVKNQ) is the F-box domain. LRR repeat units follow at residues 114–142 (KLEIYGEDGYLLPSEVFTCKTIVDLKLTS), 143–170 (CIFAESYVIDVIPENAFLPGLESLFLKS), 173–198 (FSDLRGCAFQTLLSACPVLKTLTIYD), 225–250 (FTYFNGSDFKSITFDTPSLTYLKYID), 287–312 (EDDPITSNPTNLIKGLRNVEILHLST), and 342–367 (YECFNWRLLPILLKKTPNLKTLMIKG).

The protein is Putative F-box/LRR-repeat protein At3g58920 of Arabidopsis thaliana (Mouse-ear cress).